Consider the following 447-residue polypeptide: Argininosuccinate synthase (447 aa).

Residues 20 to 28 and Ala46 contribute to the ATP site; that span reads AFSGGLDTS. L-citrulline is bound at residue Tyr102. The ATP site is built by Gly132 and Thr134. 3 residues coordinate L-aspartate: Thr134, Asn138, and Asp139. L-citrulline is bound at residue Asn138. Asp139 provides a ligand contact to ATP. L-citrulline is bound by residues Arg142 and Ser195. Position 197 (Asp197) interacts with ATP. Positions 204, 206, and 283 each coordinate L-citrulline.

It belongs to the argininosuccinate synthase family. Type 2 subfamily. As to quaternary structure, homotetramer.

The protein localises to the cytoplasm. It carries out the reaction L-citrulline + L-aspartate + ATP = 2-(N(omega)-L-arginino)succinate + AMP + diphosphate + H(+). Its pathway is amino-acid biosynthesis; L-arginine biosynthesis; L-arginine from L-ornithine and carbamoyl phosphate: step 2/3. In Neisseria meningitidis serogroup B (strain ATCC BAA-335 / MC58), this protein is Argininosuccinate synthase (argG).